Here is a 549-residue protein sequence, read N- to C-terminus: Glucose-6-phosphate isomerase (549 aa).

Glutamate 355 acts as the Proton donor in catalysis. Residues histidine 386 and lysine 514 contribute to the active site.

It belongs to the GPI family.

The protein resides in the cytoplasm. The enzyme catalyses alpha-D-glucose 6-phosphate = beta-D-fructose 6-phosphate. It participates in carbohydrate biosynthesis; gluconeogenesis. Its pathway is carbohydrate degradation; glycolysis; D-glyceraldehyde 3-phosphate and glycerone phosphate from D-glucose: step 2/4. Functionally, catalyzes the reversible isomerization of glucose-6-phosphate to fructose-6-phosphate. This is Glucose-6-phosphate isomerase from Edwardsiella ictaluri (strain 93-146).